The chain runs to 298 residues: MNNLQAQFPHIAIKLNEPLSKYTYTKTGGNADVFVMPKTIEETKEIVTYCHQNKLPLTILGNGSNLIIKDGGIRGVIVHLDLLQSIERKNTQIIAMSGAKLIDTAKFALDESLSGLEFACGIPGSIGGALHMNAGAYGGEISDVLEAATVLTQSGELKKLKRSELKAAYRFSTIAEKKYIVLDATFSLELEDKNIIQAKMDELTALREAKQPLEYPSCGSVFKRPPGHFAGKLIQDSGLQGHIIGGAQVSLKHAGFIVNIGGATATDYMNLIAHVQQTVREKFDVELETEVKIIGEDK.

The FAD-binding PCMH-type domain occupies 27 to 191 (TGGNADVFVM…LDATFSLELE (165 aa)). Residue R170 is part of the active site. The Proton donor role is filled by S220. Residue E290 is part of the active site.

Belongs to the MurB family. It depends on FAD as a cofactor.

The protein localises to the cytoplasm. The catalysed reaction is UDP-N-acetyl-alpha-D-muramate + NADP(+) = UDP-N-acetyl-3-O-(1-carboxyvinyl)-alpha-D-glucosamine + NADPH + H(+). The protein operates within cell wall biogenesis; peptidoglycan biosynthesis. Cell wall formation. This Listeria innocua serovar 6a (strain ATCC BAA-680 / CLIP 11262) protein is UDP-N-acetylenolpyruvoylglucosamine reductase.